The chain runs to 134 residues: Ribosome-binding factor A (134 aa).

This sequence belongs to the RbfA family. In terms of assembly, monomer. Binds 30S ribosomal subunits, but not 50S ribosomal subunits or 70S ribosomes.

The protein resides in the cytoplasm. One of several proteins that assist in the late maturation steps of the functional core of the 30S ribosomal subunit. Associates with free 30S ribosomal subunits (but not with 30S subunits that are part of 70S ribosomes or polysomes). Required for efficient processing of 16S rRNA. May interact with the 5'-terminal helix region of 16S rRNA. The protein is Ribosome-binding factor A of Rhizobium johnstonii (strain DSM 114642 / LMG 32736 / 3841) (Rhizobium leguminosarum bv. viciae).